The primary structure comprises 753 residues: Pesticidal crystal protein Cry20Aa (753 aa).

The segment covering 680-696 (DTTYQPSYDNYNQNASG) has biased composition (polar residues). The disordered stretch occupies residues 680–721 (DTTYQPSYDNYNQNASGTYDDGYNPNASDSYDQSYTNNYSQN). Low complexity predominate over residues 712–721 (QSYTNNYSQN).

The protein belongs to the delta endotoxin family. Has low mosquitocidal activity probably due to rapid proteolysis to inactive 56 kDa and 43 kDa proteins.

Promotes colloidosmotic lysis by binding to the midgut epithelial cells of mosquitos. Active against Aedes aegypti and Culex quinquefasciatus larvae. The protein is Pesticidal crystal protein Cry20Aa (cry20Aa) of Bacillus thuringiensis subsp. fukuokaensis.